Here is a 101-residue protein sequence, read N- to C-terminus: MMDESLCGGLPPEICEQLSVEEQIIKIRLEKRRFGREVTIIEGINEKEFNLKKLASTLKSRLATGGTAKNGRIELQGDHRHRVKKILVELGFPEENITIID.

Belongs to the SUI1 family.

The chain is Protein translation factor SUI1 homolog from Aeropyrum pernix (strain ATCC 700893 / DSM 11879 / JCM 9820 / NBRC 100138 / K1).